The primary structure comprises 76 residues: Exodeoxyribonuclease 7 small subunit (76 aa).

It belongs to the XseB family. As to quaternary structure, heterooligomer composed of large and small subunits.

It localises to the cytoplasm. The catalysed reaction is Exonucleolytic cleavage in either 5'- to 3'- or 3'- to 5'-direction to yield nucleoside 5'-phosphates.. Bidirectionally degrades single-stranded DNA into large acid-insoluble oligonucleotides, which are then degraded further into small acid-soluble oligonucleotides. In Geobacter metallireducens (strain ATCC 53774 / DSM 7210 / GS-15), this protein is Exodeoxyribonuclease 7 small subunit.